The primary structure comprises 134 residues: Complexin-1 (134 aa).

The disordered stretch occupies residues 1 to 112 (MEFVMKQALG…PGCGDAAEEE (112 aa)). Over residues 15–81 (DMGKMLGGDE…IKKKEEREAE (67 aa)) the composition is skewed to basic and acidic residues. A coiled-coil region spans residues 29–69 (DAAKKEEERQEALRQEEEERKAKYAKMEAEREAVRQGIRDK). Residues 48-70 (RKAKYAKMEAEREAVRQGIRDKY) form an interaction with the SNARE complex region.

The protein belongs to the complexin/synaphin family. Binds to the SNARE core complex containing SNAP25, VAMP2 and STX1A.

It is found in the cytoplasm. Its subcellular location is the cytosol. It localises to the perikaryon. The protein localises to the presynapse. Its function is as follows. Positively regulates a late step in synaptic vesicle exocytosis. Organizes the SNAREs into a cross-linked zigzag topology that, when interposed between the vesicle and plasma membranes, is incompatible with fusion, thereby preventing SNAREs from releasing neurotransmitters until an action potential arrives at the synapse. Also involved in glucose-induced secretion of insulin by pancreatic beta-cells. This chain is Complexin-1 (CPLX1), found in Bos taurus (Bovine).